We begin with the raw amino-acid sequence, 101 residues long: Cilia- and flagella-associated protein 141 (101 aa).

Microtubule inner protein component of sperm flagellar doublet microtubules. In terms of tissue distribution, expressed in airway epithelial cells.

It is found in the cytoplasm. It localises to the cytoskeleton. Its subcellular location is the cilium axoneme. The protein localises to the flagellum axoneme. Microtubule inner protein (MIP) part of the dynein-decorated doublet microtubules (DMTs) in cilia axoneme, which is required for motile cilia beating. This is Cilia- and flagella-associated protein 141 from Homo sapiens (Human).